We begin with the raw amino-acid sequence, 282 residues long: Shikimate dehydrogenase (NADP(+)) (282 aa).

Residues 15–17 and threonine 62 each bind shikimate; that span reads SKS. Lysine 66 functions as the Proton acceptor in the catalytic mechanism. The shikimate site is built by asparagine 87 and aspartate 103. Residues 127–131, 151–156, and methionine 220 each bind NADP(+); these read GAGGA and NRTHTK. Tyrosine 222 provides a ligand contact to shikimate. Glycine 244 serves as a coordination point for NADP(+).

The protein belongs to the shikimate dehydrogenase family. As to quaternary structure, homodimer.

The enzyme catalyses shikimate + NADP(+) = 3-dehydroshikimate + NADPH + H(+). Its pathway is metabolic intermediate biosynthesis; chorismate biosynthesis; chorismate from D-erythrose 4-phosphate and phosphoenolpyruvate: step 4/7. Its function is as follows. Involved in the biosynthesis of the chorismate, which leads to the biosynthesis of aromatic amino acids. Catalyzes the reversible NADPH linked reduction of 3-dehydroshikimate (DHSA) to yield shikimate (SA). This chain is Shikimate dehydrogenase (NADP(+)), found in Shewanella baltica (strain OS195).